A 328-amino-acid polypeptide reads, in one-letter code: Lactamase-like protein nscB (328 aa).

4 residues coordinate Zn(2+): H97, H99, D101, and H102. Residue D101 is the Proton donor/acceptor of the active site.

This sequence belongs to the metallo-beta-lactamase superfamily. It depends on Zn(2+) as a cofactor.

It functions in the pathway secondary metabolite biosynthesis. Functionally, lactamase-like protein; part of the gene cluster that mediates the biosynthesis of neosartoricin, a prenylated anthracenone that exhibits T-cell antiproliferative activity, suggestive of a physiological role as an immunosuppressive agent. The non-reducing polyketide synthase nscA probably synthesizes and cyclizes the decaketide backbone. The hydrolase nscB then mediates the product release through hydrolysis followed by spontaneous decarboxylation. The prenyltransferase nscD catalyzes the addition of the dimethylallyl group to the aromatic C5. The FAD-dependent monooxygenase nscC is then responsible for the stereospecific hydroxylation at C2. There is no gene encoding O-acetyltransferase in the nsc gene cluster; thus, the last step of 2-O-acetylation leading to neosartoricin may be catalyzed by an unidentified O-acetyltransferase. The chain is Lactamase-like protein nscB from Neosartorya fischeri (strain ATCC 1020 / DSM 3700 / CBS 544.65 / FGSC A1164 / JCM 1740 / NRRL 181 / WB 181) (Aspergillus fischerianus).